A 300-amino-acid polypeptide reads, in one-letter code: Epimerase family protein SAB0724c (300 aa).

It belongs to the NAD(P)-dependent epimerase/dehydratase family. SDR39U1 subfamily.

The chain is Epimerase family protein SAB0724c from Staphylococcus aureus (strain bovine RF122 / ET3-1).